A 227-amino-acid chain; its full sequence is Cytochrome c oxidase subunit 2 (227 aa).

At 1–14 (MAYPFQLGLQDATS) the chain is on the mitochondrial intermembrane side. A helical membrane pass occupies residues 15 to 45 (PIMEELLHFHDHTLMIVFLISSLVLYIISLM). Topologically, residues 46 to 59 (LTTKLTHTSTMDAQ) are mitochondrial matrix. A helical transmembrane segment spans residues 60–87 (EVETVWTILPAIILVLIALPSLRILYMM). The Mitochondrial intermembrane portion of the chain corresponds to 88–227 (DEINNPSLTV…YFETWSALMV (140 aa)). H161, C196, E198, C200, H204, and M207 together coordinate Cu cation. Mg(2+) is bound at residue E198. Y218 carries the post-translational modification Phosphotyrosine.

Belongs to the cytochrome c oxidase subunit 2 family. As to quaternary structure, component of the cytochrome c oxidase (complex IV, CIV), a multisubunit enzyme composed of 14 subunits. The complex is composed of a catalytic core of 3 subunits MT-CO1, MT-CO2 and MT-CO3, encoded in the mitochondrial DNA, and 11 supernumerary subunits COX4I, COX5A, COX5B, COX6A, COX6B, COX6C, COX7A, COX7B, COX7C, COX8 and NDUFA4, which are encoded in the nuclear genome. The complex exists as a monomer or a dimer and forms supercomplexes (SCs) in the inner mitochondrial membrane with NADH-ubiquinone oxidoreductase (complex I, CI) and ubiquinol-cytochrome c oxidoreductase (cytochrome b-c1 complex, complex III, CIII), resulting in different assemblies (supercomplex SCI(1)III(2)IV(1) and megacomplex MCI(2)III(2)IV(2)). Found in a complex with TMEM177, COA6, COX18, COX20, SCO1 and SCO2. Interacts with TMEM177 in a COX20-dependent manner. Interacts with COX20. Interacts with COX16. The cofactor is Cu cation.

The protein resides in the mitochondrion inner membrane. It carries out the reaction 4 Fe(II)-[cytochrome c] + O2 + 8 H(+)(in) = 4 Fe(III)-[cytochrome c] + 2 H2O + 4 H(+)(out). In terms of biological role, component of the cytochrome c oxidase, the last enzyme in the mitochondrial electron transport chain which drives oxidative phosphorylation. The respiratory chain contains 3 multisubunit complexes succinate dehydrogenase (complex II, CII), ubiquinol-cytochrome c oxidoreductase (cytochrome b-c1 complex, complex III, CIII) and cytochrome c oxidase (complex IV, CIV), that cooperate to transfer electrons derived from NADH and succinate to molecular oxygen, creating an electrochemical gradient over the inner membrane that drives transmembrane transport and the ATP synthase. Cytochrome c oxidase is the component of the respiratory chain that catalyzes the reduction of oxygen to water. Electrons originating from reduced cytochrome c in the intermembrane space (IMS) are transferred via the dinuclear copper A center (CU(A)) of subunit 2 and heme A of subunit 1 to the active site in subunit 1, a binuclear center (BNC) formed by heme A3 and copper B (CU(B)). The BNC reduces molecular oxygen to 2 water molecules using 4 electrons from cytochrome c in the IMS and 4 protons from the mitochondrial matrix. In Cerdocyon thous (Crab-eating fox), this protein is Cytochrome c oxidase subunit 2 (MT-CO2).